The sequence spans 80 residues: MGMRMMFTVFLLVVLATTVVSIPSDRASDGRNAAVNERQTWLVPSTITTCCGYDPGTMCPTCMCDNTCKPKPKKSGRRND.

The signal sequence occupies residues 1–21 (MGMRMMFTVFLLVVLATTVVS). Positions 22 to 38 (IPSDRASDGRNAAVNER) are excised as a propeptide. Gln39 is subject to Pyrrolidone carboxylic acid. An O-linked (HexNAc...) serine glycan is attached at Ser45. Pro55, Pro60, Pro70, and Pro72 each carry 4-hydroxyproline. The residue at position 75 (Ser75) is a Serine amide. Residues 76 to 80 (GRRND) constitute a propeptide that is removed on maturation.

It belongs to the conotoxin A superfamily. In terms of processing, contains 3 disulfide bonds. As to expression, expressed by the venom duct.

The protein resides in the secreted. Its function is as follows. Neurotoxin with probable activity on sodium channel. Induces intense repetitive firing of the frog neuromuscular junction, leading to a tetanic contracture in muscle fiber (spastic paralysis). In vivo, shows the same effect as the whole venom when injected on fish prey. The protein is Conotoxin SmIVA of Conus stercusmuscarum (Fly-specked cone).